The chain runs to 364 residues: Phenylalanine dehydrogenase (364 aa).

R62 provides a ligand contact to NAD(+). Residue K86 coordinates L-phenylalanine. The active-site Proton donor/acceptor is the K98. NAD(+) contacts are provided by residues D133, S164, T168, 255–256 (AM), and 276–278 (AAN). N278 lines the L-phenylalanine pocket.

It belongs to the Glu/Leu/Phe/Val dehydrogenases family.

It catalyses the reaction L-phenylalanine + NAD(+) + H2O = 3-phenylpyruvate + NH4(+) + NADH + H(+). The protein operates within amino-acid biosynthesis; L-phenylalanine biosynthesis; L-phenylalanine from phenylpyruvate (PDH route): step 1/1. Its function is as follows. Catalyzes the reversible NAD(+)-dependent oxidative deamination of L-phenylalanine to phenylpyruvate. This is Phenylalanine dehydrogenase from Rhodococcus jostii (strain RHA1).